Reading from the N-terminus, the 529-residue chain is Interleukin-21 receptor (529 aa).

A signal peptide spans 1-19 (MPRGPVAALLLLILHGAWS). Cystine bridges form between cysteine 20–cysteine 109, cysteine 25–cysteine 35, and cysteine 65–cysteine 81. Over 20 to 237 (CLDLTCYTDY…GEPEAGWDPH (218 aa)) the chain is Extracellular. 2 Fibronectin type-III domains span residues 21–118 (LDLT…AESI) and 119–228 (KPAP…TQAG). N-linked (GlcNAc...) asparagine glycans are attached at residues asparagine 73, asparagine 97, asparagine 104, asparagine 125, and asparagine 182. The C-linked (Man) tryptophan glycan is linked to tryptophan 214. Residues 214 to 218 (WSEWS) carry the WSXWS motif motif. The chain crosses the membrane as a helical span at residues 238-258 (MLLLLAVLIIVLVFMGLKIHL). At 259–529 (PWRLWKKIWA…PPVDSGAQSS (271 aa)) the chain is on the cytoplasmic side. The Box 1 motif motif lies at 266–274 (IWAPVPTPE). The tract at residues 458–529 (TADPTWRTGS…PPVDSGAQSS (72 aa)) is disordered.

It belongs to the type I cytokine receptor family. Type 4 subfamily. In terms of assembly, heterodimer with the common gamma subunit. Associates with JAK1. In terms of processing, C-mannosylated at Trp-214 in the WSXWS motif, the sugar chain makes extensive hydrogen bonds with Asn-73 sugar, and bridges the two fibronectin domains transforming the V-shaped receptor into an A-frame. As to expression, selectively expressed in lymphoid tissues. Most highly expressed in thymus and spleen.

The protein resides in the membrane. In terms of biological role, this is a receptor for interleukin-21. In Mus musculus (Mouse), this protein is Interleukin-21 receptor (Il21r).